The chain runs to 105 residues: Protein METHYLENE BLUE SENSITIVITY 1 (105 aa).

Residues 26–46 (RGGGKAGIADRTGKEKGGHAK) form a disordered region. Residues 36–46 (RTGKEKGGHAK) are compositionally biased toward basic and acidic residues.

Mainly expressed in the epidermis.

Its subcellular location is the nucleus. It localises to the cytoplasm. The protein localises to the stress granule. Functionally, required for acclimation to reactive oxygen species (ROS) responses downstream of beta-cyclocitral (beta-cc) or mediated by dihydroactinidiolide, including singlet oxygen 1O(2) detoxification reactions, especially upon light-mediated photooxidative stress, and leading to programmed cell death. Prevents leaf senescence. Involved in cold acclimation. The chain is Protein METHYLENE BLUE SENSITIVITY 1 from Arabidopsis thaliana (Mouse-ear cress).